Consider the following 318-residue polypeptide: L-lactate dehydrogenase (318 aa).

NAD(+) is bound by residues valine 20, aspartate 41, lysine 46, tyrosine 71, and glycine 85–alanine 86. Substrate is bound by residues glutamine 88, arginine 94, and asparagine 126–aspartate 129. NAD(+)-binding positions include alanine 124 to asparagine 126 and serine 149. Substrate is bound at residue aspartate 154–arginine 157. Beta-D-fructose 1,6-bisphosphate is bound by residues arginine 159 and histidine 174. Catalysis depends on histidine 181, which acts as the Proton acceptor. Residue tyrosine 226 is modified to Phosphotyrosine. Threonine 235 provides a ligand contact to substrate.

It belongs to the LDH/MDH superfamily. LDH family. In terms of assembly, homotetramer.

It localises to the cytoplasm. It carries out the reaction (S)-lactate + NAD(+) = pyruvate + NADH + H(+). Its pathway is fermentation; pyruvate fermentation to lactate; (S)-lactate from pyruvate: step 1/1. Allosterically activated by fructose 1,6-bisphosphate (FBP). Catalyzes the conversion of lactate to pyruvate. The protein is L-lactate dehydrogenase of Priestia megaterium (Bacillus megaterium).